We begin with the raw amino-acid sequence, 154 residues long: Jupiter microtubule associated homolog 1 (154 aa).

An N-acetylmethionine modification is found at M1. Over residues 1–19 (MTTTTTFKGVDPNSRNSSR) the composition is skewed to polar residues. Positions 1 to 154 (MTTTTTFKGV…PGGKSSLVLG (154 aa)) are disordered. Position 2 is an N-acetylthreonine; in Hematological and neurological expressed 1 protein, N-terminally processed (T2). Residues S28 and S31 each carry the phosphoserine modification. Positions 47–59 (MASNIFGTPEENQ) are enriched in polar residues. Position 54 is a phosphothreonine (T54). Positions 60–71 (ASWAKSAGAKSS) are enriched in low complexity. S71, S80, S87, S88, and S92 each carry phosphoserine. Over residues 80–91 (SGLQRRNSSEAS) the composition is skewed to polar residues. Residues 96–108 (LDLKGEGDIHENV) show a composition bias toward basic and acidic residues. The span at 125–138 (PAAPVPSPVAPAPV) shows a compositional bias: pro residues. Residue S131 is modified to Phosphoserine. K148 is subject to N6-acetyllysine.

This sequence belongs to the JUPITER family. As to quaternary structure, interacts with the complex composed, at least, of APC, CTNNB1 and GSK3B; the interaction takes place with the inactive form of GSK3B (phosphorylated at 'Ser-9'). As to expression, expressed in testis, skeletal muscle, thymus, prostate, colon, peripheral blood cells, brain and placenta.

It localises to the nucleus. The protein localises to the cytoplasm. Functionally, modulates negatively AKT-mediated GSK3B signaling. Induces CTNNB1 'Ser-33' phosphorylation and degradation through the suppression of the inhibitory 'Ser-9' phosphorylation of GSK3B, which represses the function of the APC:CTNNB1:GSK3B complex and the interaction with CDH1/E-cadherin in adherent junctions. Plays a role in the regulation of cell cycle and cell adhesion. Has an inhibitory role on AR-signaling pathway through the induction of receptor proteasomal degradation. This is Jupiter microtubule associated homolog 1 from Homo sapiens (Human).